A 505-amino-acid chain; its full sequence is Lysine--tRNA ligase (505 aa).

The Mg(2+) site is built by glutamate 415 and glutamate 422.

The protein belongs to the class-II aminoacyl-tRNA synthetase family. As to quaternary structure, homodimer. Requires Mg(2+) as cofactor.

The protein localises to the cytoplasm. It carries out the reaction tRNA(Lys) + L-lysine + ATP = L-lysyl-tRNA(Lys) + AMP + diphosphate. In Vibrio parahaemolyticus serotype O3:K6 (strain RIMD 2210633), this protein is Lysine--tRNA ligase.